We begin with the raw amino-acid sequence, 1780 residues long: Chitin synthase Vb (1780 aa).

Residues N133, N153, N629, N644, N655, and N660 are each glycosylated (N-linked (GlcNAc...) asparagine). Transmembrane regions (helical) follow at residues 740–760 (AWIA…LKFI) and 776–796 (FVLF…IIGF). A Cytochrome b5 heme-binding domain is found at 805 to 866 (NKAWNVKEVA…LSGMVMDNYF (62 aa)). N-linked (GlcNAc...) asparagine glycans are attached at residues N888 and N1009. Residues 1046–1066 (LLLAFAIIICIVTAVKFLAAL) form a helical membrane-spanning segment. The N-linked (GlcNAc...) asparagine glycan is linked to N1411. Helical transmembrane passes span 1442-1462 (LCGT…IYIL), 1469-1489 (IPYI…LIFI), and 1497-1517 (IGWM…LPLY). A glycan (N-linked (GlcNAc...) asparagine) is linked at N1524. The interval 1649 to 1691 (TGVHDMRSQSPYQDYPGQHPSVSNLRGQANLSPATGGGHSRSG) is disordered. Over residues 1668-1681 (PSVSNLRGQANLSP) the composition is skewed to polar residues. The DEK-C domain maps to 1722–1778 (GPNDMAIVESIRSVLCEVDLDTVTKKQVRALVEQRLQTELVGERRTFMDRQIDHELE).

Belongs to the chitin synthase family. Class VII subfamily.

It is found in the cell membrane. It carries out the reaction [(1-&gt;4)-N-acetyl-beta-D-glucosaminyl](n) + UDP-N-acetyl-alpha-D-glucosamine = [(1-&gt;4)-N-acetyl-beta-D-glucosaminyl](n+1) + UDP + H(+). Functionally, polymerizes chitin, a structural polymer of the cell wall and septum, by transferring the sugar moiety of UDP-GlcNAc to the non-reducing end of the growing chitin polymer. ChsV and chsVb do perform additive, but not redundant, functions in septum formation. Functions not only in the maintenance of cell wall integrity under different osmotic conditions but also in polarized cell wall synthesis. Plays an important role in the complex infection process of this fungus. The protein is Chitin synthase Vb of Fusarium oxysporum f. sp. lycopersici (strain 4287 / CBS 123668 / FGSC 9935 / NRRL 34936) (Fusarium vascular wilt of tomato).